The following is a 527-amino-acid chain: Bifunctional purine biosynthesis protein PurH (527 aa).

The 149-residue stretch at 1 to 149 (MASDFLPVRR…KNFARVAVAT (149 aa)) folds into the MGS-like domain.

The protein belongs to the PurH family.

It carries out the reaction (6R)-10-formyltetrahydrofolate + 5-amino-1-(5-phospho-beta-D-ribosyl)imidazole-4-carboxamide = 5-formamido-1-(5-phospho-D-ribosyl)imidazole-4-carboxamide + (6S)-5,6,7,8-tetrahydrofolate. The enzyme catalyses IMP + H2O = 5-formamido-1-(5-phospho-D-ribosyl)imidazole-4-carboxamide. It functions in the pathway purine metabolism; IMP biosynthesis via de novo pathway; 5-formamido-1-(5-phospho-D-ribosyl)imidazole-4-carboxamide from 5-amino-1-(5-phospho-D-ribosyl)imidazole-4-carboxamide (10-formyl THF route): step 1/1. The protein operates within purine metabolism; IMP biosynthesis via de novo pathway; IMP from 5-formamido-1-(5-phospho-D-ribosyl)imidazole-4-carboxamide: step 1/1. The sequence is that of Bifunctional purine biosynthesis protein PurH from Xanthomonas oryzae pv. oryzae (strain KACC10331 / KXO85).